A 355-amino-acid polypeptide reads, in one-letter code: Guanine nucleotide-binding protein subunit alpha-14 (355 aa).

The G-alpha domain maps to 34 to 355 (RELKLLLLGT…QLNLREFNLV (322 aa)). Residues 37–50 (KLLLLGTGESGKST) form a G1 motif region. Residues 42–49 (GTGESGKS), 176–182 (LRVRVPT), 201–205 (DVGGQ), 270–273 (NKKD), and A327 each bind GTP. S49 is a binding site for Mg(2+). The segment at 174–182 (DVLRVRVPT) is G2 motif. R179 bears the ADP-ribosylarginine; by cholera toxin mark. T182 is a binding site for Mg(2+). Residues 197–206 (FRMVDVGGQR) are G3 motif. Residues 266–273 (ILFLNKKD) form a G4 motif region. The tract at residues 325–330 (TCATDT) is G5 motif.

It belongs to the G-alpha family. G(q) subfamily. G proteins are composed of 3 units; alpha, beta and gamma. The alpha chain contains the guanine nucleotide binding site.

Functionally, guanine nucleotide-binding proteins (G proteins) are involved as modulators or transducers in various transmembrane signaling systems. In Homo sapiens (Human), this protein is Guanine nucleotide-binding protein subunit alpha-14 (GNA14).